Reading from the N-terminus, the 163-residue chain is C-type lectin lectoxin-Lio2 (163 aa).

A signal peptide spans 1 to 21; it reads MERFIFAALLVVALSLSGTGA. Intrachain disulfides connect Cys-25/Cys-36, Cys-53/Cys-152, and Cys-127/Cys-144. One can recognise a C-type lectin domain in the interval 32-153; sequence SDGYCYKVFK…CRSKRYFICK (122 aa). Residues 117 to 119 carry the Mannose-binding motif; the sequence is EPN. Positions 125 and 141 each coordinate Ca(2+).

It belongs to the true venom lectin family. As to expression, expressed by the venom gland.

It is found in the secreted. Its function is as follows. Mannose-binding lectin which recognizes specific carbohydrate structures and agglutinates a variety of animal cells by binding to cell-surface glycoproteins and glycolipids. May be a calcium-dependent lectin. This Erythrolamprus poecilogyrus (Water snake) protein is C-type lectin lectoxin-Lio2.